Here is a 239-residue protein sequence, read N- to C-terminus: MLIIAGLGNPGSKYAGNRHNIGFMAVDAIWQRQGFSSWSKKFKAEIAEGEIAGERVLLIKPQTFMNLSGEAVGEAMRFYKLAPKDIVVIYDELDLIAGKARIKIGGGHGGHNGIKSIDAHCGKEYRRLRLGIGHPGVKDLVHAHVLGDFAKADQAWLSSLLDTIADNAGMLVKGEDSQLMNKIALATGGKPDAEEPQAPKKQVGQSHIHKARNAAQPKKLPATGPMADMLKKMFGSKGD.

TRNA is bound at residue Tyr14. His19 (proton acceptor) is an active-site residue. Positions 64, 66, and 112 each coordinate tRNA. The segment at 188–225 is disordered; sequence GGKPDAEEPQAPKKQVGQSHIHKARNAAQPKKLPATGP.

It belongs to the PTH family. In terms of assembly, monomer.

The protein localises to the cytoplasm. The catalysed reaction is an N-acyl-L-alpha-aminoacyl-tRNA + H2O = an N-acyl-L-amino acid + a tRNA + H(+). In terms of biological role, hydrolyzes ribosome-free peptidyl-tRNAs (with 1 or more amino acids incorporated), which drop off the ribosome during protein synthesis, or as a result of ribosome stalling. Functionally, catalyzes the release of premature peptidyl moieties from peptidyl-tRNA molecules trapped in stalled 50S ribosomal subunits, and thus maintains levels of free tRNAs and 50S ribosomes. The chain is Peptidyl-tRNA hydrolase from Sinorhizobium fredii (strain NBRC 101917 / NGR234).